A 190-amino-acid polypeptide reads, in one-letter code: MNVEKFEGAELHVHVTGSISAALVPWWIHWLREFQPELVVNVSVTPAASRFLAVRALRHLANGKVWVDSWDDPDVPPEVNSGKSGASECFLVFPATLDTVMRLAQGRADSPALMMLQLTDAPLVIADTFPGSNEIVENNVQTLKLRPNVEFAPRVNGVRASNRQTAEVGFNLPGALAAANRMRKEGRSGE.

This sequence belongs to the HFCD (homooligomeric flavin containing Cys decarboxylase) superfamily.

It carries out the reaction [cypemycin](1-18)-L-Cys-L-Leu-L-Val-L-Cys + A = C(3,19),S(21)-[cypemycin](1-18)-L-Ala-L-Leu-N-thioethenyl-L-valinamide + hydrogen sulfide + AH2 + CO2. Functionally, involved in the biosynthesis of the lanaridin cypemycin. The polypeptide is Cypemycin cysteine dehydrogenase (decarboxylating) (Streptomyces sp).